Consider the following 379-residue polypeptide: Homoserine O-succinyltransferase (379 aa).

Residues 51 to 360 (NAVLICHALS…DSPYGHDAFL (310 aa)) enclose the AB hydrolase-1 domain. Ser157 acts as the Nucleophile in catalysis. Arg227 contacts substrate. Catalysis depends on residues Asp323 and His356. A substrate-binding site is contributed by Asp357.

The protein belongs to the AB hydrolase superfamily. MetX family. In terms of assembly, homodimer.

The protein resides in the cytoplasm. It catalyses the reaction L-homoserine + succinyl-CoA = O-succinyl-L-homoserine + CoA. The protein operates within amino-acid biosynthesis; L-methionine biosynthesis via de novo pathway; O-succinyl-L-homoserine from L-homoserine: step 1/1. With respect to regulation, requires MetW for activity. In terms of biological role, transfers a succinyl group from succinyl-CoA to L-homoserine, forming succinyl-L-homoserine. This chain is Homoserine O-succinyltransferase, found in Pseudomonas putida (strain ATCC 47054 / DSM 6125 / CFBP 8728 / NCIMB 11950 / KT2440).